A 358-amino-acid polypeptide reads, in one-letter code: MAGHVSAVDDILAEYHGLEEQMADPALHNDPAAARRVGKRYSELQPIINVHRQLVQVRDDLEAAREMAHEDHEFAAEAERLEVELVELEEKLADLLAPRDEHDGDDIVMEIKAGAGGEEAALFAGDLLRMYQKYADKHGFIIEVLDSAESDLGGVKDITLSIRSRQPSRDGAWSQFKFEGGVHRVQRVPVTESQGRIQTSAAGVLVYPEPDEVEDVEIDEKEIRVDVYRSSGKGGQGVNTTDSAVRITHLPTGIVVTCQKERSQIQNRARAMQVLAARLQALQKEEADAEAAEGRASQIRTMDRSERIRTYNWPENRISDHRIGFKANNLDAVLNGELDDLFTALRAAERAERLEADN.

Gln-236 bears the N5-methylglutamine mark.

Belongs to the prokaryotic/mitochondrial release factor family. Methylated by PrmC. Methylation increases the termination efficiency of RF1.

Its subcellular location is the cytoplasm. In terms of biological role, peptide chain release factor 1 directs the termination of translation in response to the peptide chain termination codons UAG and UAA. In Corynebacterium efficiens (strain DSM 44549 / YS-314 / AJ 12310 / JCM 11189 / NBRC 100395), this protein is Peptide chain release factor 1.